Here is a 1385-residue protein sequence, read N- to C-terminus: DNA-directed RNA polymerase subunit beta'' (1385 aa).

Positions 220, 293, 300, and 303 each coordinate Zn(2+).

The protein belongs to the RNA polymerase beta' chain family. RpoC2 subfamily. In terms of assembly, in plastids the minimal PEP RNA polymerase catalytic core is composed of four subunits: alpha, beta, beta', and beta''. When a (nuclear-encoded) sigma factor is associated with the core the holoenzyme is formed, which can initiate transcription. Zn(2+) is required as a cofactor.

It localises to the plastid. It is found in the chloroplast. The enzyme catalyses RNA(n) + a ribonucleoside 5'-triphosphate = RNA(n+1) + diphosphate. Functionally, DNA-dependent RNA polymerase catalyzes the transcription of DNA into RNA using the four ribonucleoside triphosphates as substrates. This chain is DNA-directed RNA polymerase subunit beta'', found in Aethionema cordifolium (Lebanon stonecress).